A 206-amino-acid chain; its full sequence is Ephrin-A4 (206 aa).

The signal sequence occupies residues 1-25 (MRLLPLLRTVLWAALLGSRLPGCSS). Positions 26–158 (LRHPIYWNSS…RLQVSVCCKE (133 aa)) constitute an Ephrin RBD domain. N-linked (GlcNAc...) asparagine glycosylation occurs at Asn-33. Positions 41–43 (RGD) match the Cell attachment site motif. Cystine bridges form between Cys-58–Cys-99 and Cys-86–Cys-147. N-linked (GlcNAc...) asparagine glycosylation occurs at Asn-98. Residues 161 to 180 (SSHESAHPVGSPGESGTSGW) are disordered. Ser-175 carries the GPI-anchor amidated serine lipid modification. The propeptide at 176 to 206 (GTSGWRGGHAPSPLCLLLLLLLPILRLLRVL) is removed in mature form.

This sequence belongs to the ephrin family. In terms of tissue distribution, expressed in myogenic progenitor cells.

The protein resides in the cell membrane. In terms of biological role, cell surface GPI-bound ligand for Eph receptors, a family of receptor tyrosine kinases which are crucial for migration, repulsion and adhesion during neuronal, vascular and epithelial development. Binds promiscuously Eph receptors residing on adjacent cells, leading to contact-dependent bidirectional signaling into neighboring cells. May play a role in the interaction between activated B-lymphocytes and dendritic cells in tonsils. This Mus musculus (Mouse) protein is Ephrin-A4 (Efna4).